A 194-amino-acid polypeptide reads, in one-letter code: Fe/S biogenesis protein NfuA (194 aa).

Positions 152 and 155 each coordinate [4Fe-4S] cluster.

Belongs to the NfuA family. In terms of assembly, homodimer. [4Fe-4S] cluster is required as a cofactor.

Its function is as follows. Involved in iron-sulfur cluster biogenesis. Binds a 4Fe-4S cluster, can transfer this cluster to apoproteins, and thereby intervenes in the maturation of Fe/S proteins. Could also act as a scaffold/chaperone for damaged Fe/S proteins. The protein is Fe/S biogenesis protein NfuA of Pseudomonas aeruginosa (strain LESB58).